Consider the following 463-residue polypeptide: MSDTVIIAGGGPVGLMLACELGLAGVDTVVLERHDAPREPSRGGAINATVVELFTQRGIMESLRDDGFEFRMAHFAHIPLAPERVPGDRAFSFAVPHAQVERRLEERARSLGVRVRRSTEITSVRQTPDGVQVTTGDGEVVEGAYLVGCDGSASLVREQAGIPFPGVDPDFHGLWGDIKVEPGAPVLERIGARQYELGLCMVAPIGPDTVRVITGEFDVPSPPADQEVGFDELRAAVARIAGVELDGVPGWLSRWTATSRQAERYREGRILLAGDAAHTLFPLGGQALGTGIEDAVNLGWKLAATVQGWAPPSLLDSYHEERHAAGARACASTRAQTTIMRSLARVGELRALLTELAGLEEVNAYLVRMVGGIDGSRLPDVPLVTAEGETSVYRLLEAGRGVLLDLGAGLPAVRHPQVTYVRAEPTNRLDATAVLLRPDGVVAWRAPQDGLEAALETWFGPAA.

Residues valine 13, 32-33 (ER), isoleucine 121, and aspartate 275 contribute to the FAD site.

Belongs to the PheA/TfdB FAD monooxygenase family. In terms of assembly, homodimer. It depends on FAD as a cofactor.

It carries out the reaction 4-[(2E,7S,8E,10E,13R,14R,16E,18E)-14-ethyl-7,13-dihydroxy-2,16,18-trimethylicosa-2,8,10,16,18-pentaenoyl]-2-methylidene-5-oxo-2,5-dihydro-1H-pyrrol-3-olate = 4-[(1R,2R,4aS,5S,8aR)-2-[(2R,3R,5E,7E)-3-ethyl-2-hydroxy-5,7-dimethylnona-5,7-dien-1-yl]-5-hydroxy-1-methyl-1,2,4a,5,6,7,8,8a-octahydronaphthalene-1-carbonyl]-2-methylidene-5-oxo-2,5-dihydro-1H-pyrrol-3-olate. The protein operates within antibiotic biosynthesis. In terms of biological role, involved in the biosynthesis of the spirotetramate antibiotics pyrroindomycins. Catalyzes the intramolecular cyclization forming the dialkyldecalin moiety in pyrroindomycins, via an endo-selective [4+2] cycloaddition reaction. This is Dialkyldecalin synthase from Streptomyces rugosporus.